The sequence spans 388 residues: Succinate--CoA ligase [ADP-forming] subunit beta (388 aa).

One can recognise an ATP-grasp domain in the interval 9 to 244; the sequence is KEILRKFGVA…LDEEDPAEIE (236 aa). Residues lysine 46, 53–55, glutamate 99, alanine 102, and glutamate 107 each bind ATP; that span reads GRG. Positions 199 and 213 each coordinate Mg(2+). Residues asparagine 264 and 321 to 323 contribute to the substrate site; that span reads GIM.

The protein belongs to the succinate/malate CoA ligase beta subunit family. As to quaternary structure, heterotetramer of two alpha and two beta subunits. The cofactor is Mg(2+).

The enzyme catalyses succinate + ATP + CoA = succinyl-CoA + ADP + phosphate. It catalyses the reaction GTP + succinate + CoA = succinyl-CoA + GDP + phosphate. Its pathway is carbohydrate metabolism; tricarboxylic acid cycle; succinate from succinyl-CoA (ligase route): step 1/1. Functionally, succinyl-CoA synthetase functions in the citric acid cycle (TCA), coupling the hydrolysis of succinyl-CoA to the synthesis of either ATP or GTP and thus represents the only step of substrate-level phosphorylation in the TCA. The beta subunit provides nucleotide specificity of the enzyme and binds the substrate succinate, while the binding sites for coenzyme A and phosphate are found in the alpha subunit. This is Succinate--CoA ligase [ADP-forming] subunit beta from Burkholderia multivorans (strain ATCC 17616 / 249).